Consider the following 128-residue polypeptide: Putative protein SEM1, isoform 2 (128 aa).

Residues 22–32 (KHGIKRGRRPS) are compositionally biased toward basic residues. The segment at 22 to 42 (KHGIKRGRRPSIRSPAQRARG) is disordered.

The protein is Putative protein SEM1, isoform 2 of Homo sapiens (Human).